Reading from the N-terminus, the 139-residue chain is MAMTYHLDVVSAEKHMFSGLVQKIQVTGSEGELGIFPGHAPLLTAIKPGMVRIVKQHGEEEFIYLSGGILEVQPSVVTVLADTAIRGTDLDEARALEAKRKAEEHISSSHGDVDYAQASAELAKAIAKLRVIELTRRSM.

The protein belongs to the ATPase epsilon chain family. In terms of assembly, F-type ATPases have 2 components, CF(1) - the catalytic core - and CF(0) - the membrane proton channel. CF(1) has five subunits: alpha(3), beta(3), gamma(1), delta(1), epsilon(1). CF(0) has three main subunits: a, b and c.

The protein resides in the cell inner membrane. Its function is as follows. Produces ATP from ADP in the presence of a proton gradient across the membrane. In Serratia proteamaculans (strain 568), this protein is ATP synthase epsilon chain.